The chain runs to 272 residues: Eukaryotic translation initiation factor 3 subunit G (272 aa).

2 disordered regions span residues 1 to 28 (MPAL…PTEI) and 157 to 188 (APTT…GRDD). An RRM domain is found at 190–268 (TAIRISNLSE…LILNVEWSKP (79 aa)).

Belongs to the eIF-3 subunit G family. In terms of assembly, component of the eukaryotic translation initiation factor 3 (eIF-3) complex.

It localises to the cytoplasm. Its function is as follows. RNA-binding component of the eukaryotic translation initiation factor 3 (eIF-3) complex, which is involved in protein synthesis of a specialized repertoire of mRNAs and, together with other initiation factors, stimulates binding of mRNA and methionyl-tRNAi to the 40S ribosome. The eIF-3 complex specifically targets and initiates translation of a subset of mRNAs involved in cell proliferation. This subunit can bind 18S rRNA. This is Eukaryotic translation initiation factor 3 subunit G from Aedes aegypti (Yellowfever mosquito).